The following is a 132-amino-acid chain: Large ribosomal subunit protein uL14 (132 aa).

Belongs to the universal ribosomal protein uL14 family. Part of the 50S ribosomal subunit. Forms a cluster with proteins L3 and L24e, part of which may contact the 16S rRNA in 2 intersubunit bridges.

Binds to 23S rRNA. Forms part of two intersubunit bridges in the 70S ribosome. This chain is Large ribosomal subunit protein uL14, found in Methanosphaera stadtmanae (strain ATCC 43021 / DSM 3091 / JCM 11832 / MCB-3).